The sequence spans 561 residues: DNA ligase B (561 aa).

Lys125 acts as the N6-AMP-lysine intermediate in catalysis.

It belongs to the NAD-dependent DNA ligase family. LigB subfamily.

The catalysed reaction is NAD(+) + (deoxyribonucleotide)n-3'-hydroxyl + 5'-phospho-(deoxyribonucleotide)m = (deoxyribonucleotide)n+m + AMP + beta-nicotinamide D-nucleotide.. Catalyzes the formation of phosphodiester linkages between 5'-phosphoryl and 3'-hydroxyl groups in double-stranded DNA using NAD as a coenzyme and as the energy source for the reaction. This is DNA ligase B from Salmonella agona (strain SL483).